A 703-amino-acid polypeptide reads, in one-letter code: Protein STRUBBELIG-RECEPTOR FAMILY 8 (703 aa).

A signal peptide spans 1-27 (MAIGDRAMFTVLLLFIASISGFSVVRC). The Extracellular portion of the chain corresponds to 28–291 (VTDPSDVQAL…GKGLSGGVVT (264 aa)). 7 LRR repeats span residues 96-120 (LKSL…LPPN), 122-142 (TSLN…ISAM), 143-165 (GSLS…IFAD), 166-190 (HKSL…LSTV), 192-212 (TLSV…VLSG), 213-233 (LPLK…PKEL), and 234-256 (SSIQ…PQPE). 4 N-linked (GlcNAc...) asparagine glycosylation sites follow: Asn120, Asn130, Asn149, and Asn178. Asn226 carries N-linked (GlcNAc...) asparagine glycosylation. Residues 247–284 (DNVPASPQPERPGKKETPSGSKKPKIGSEEKSSDSGKG) are disordered. Residues 292 to 312 (GIVFGSLFVAGIIALVLYLCL) traverse the membrane as a helical segment. The Cytoplasmic segment spans residues 313-703 (HKKKRKVRGS…PEHEHVDISF (391 aa)). The 278-residue stretch at 395 to 672 (FSQENIIGEG…SEVVQQLVRL (278 aa)) folds into the Protein kinase domain. Residues 401 to 409 (IGEGSLGRV) and Lys423 contribute to the ATP site.

The protein belongs to the protein kinase superfamily. Ser/Thr protein kinase family. Expressed in seedlings, roots, stems, leaves, flowers and siliques.

The protein resides in the membrane. This is Protein STRUBBELIG-RECEPTOR FAMILY 8 (SRF8) from Arabidopsis thaliana (Mouse-ear cress).